The sequence spans 120 residues: Large ribosomal subunit protein uL18 (120 aa).

Belongs to the universal ribosomal protein uL18 family. As to quaternary structure, part of the 50S ribosomal subunit; part of the 5S rRNA/L5/L18/L25 subcomplex. Contacts the 5S and 23S rRNAs.

In terms of biological role, this is one of the proteins that bind and probably mediate the attachment of the 5S RNA into the large ribosomal subunit, where it forms part of the central protuberance. This Agrobacterium fabrum (strain C58 / ATCC 33970) (Agrobacterium tumefaciens (strain C58)) protein is Large ribosomal subunit protein uL18.